The primary structure comprises 360 residues: Alanine racemase (360 aa).

The active-site Proton acceptor; specific for D-alanine is Lys-36. Lys-36 is subject to N6-(pyridoxal phosphate)lysine. Arg-132 provides a ligand contact to substrate. The active-site Proton acceptor; specific for L-alanine is the Tyr-256. Met-304 contacts substrate.

It belongs to the alanine racemase family. Pyridoxal 5'-phosphate is required as a cofactor.

The enzyme catalyses L-alanine = D-alanine. Its pathway is amino-acid biosynthesis; D-alanine biosynthesis; D-alanine from L-alanine: step 1/1. Its function is as follows. Catalyzes the interconversion of L-alanine and D-alanine. May also act on other amino acids. This chain is Alanine racemase (alr), found in Pasteurella multocida (strain Pm70).